The sequence spans 414 residues: Tyrosine--tRNA ligase (414 aa).

Residue Y35 participates in L-tyrosine binding. Residues 40–49 (PTADSLHVGH) carry the 'HIGH' region motif. Residues Y164 and Q168 each coordinate L-tyrosine. The short motif at 226-230 (KFGKT) is the 'KMSKS' region element. Residue K229 coordinates ATP. The region spanning 347–414 (TKVIDALIEV…KKKYFVILIK (68 aa)) is the S4 RNA-binding domain.

It belongs to the class-I aminoacyl-tRNA synthetase family. TyrS type 1 subfamily. As to quaternary structure, homodimer.

It localises to the cytoplasm. It catalyses the reaction tRNA(Tyr) + L-tyrosine + ATP = L-tyrosyl-tRNA(Tyr) + AMP + diphosphate + H(+). In terms of biological role, catalyzes the attachment of tyrosine to tRNA(Tyr) in a two-step reaction: tyrosine is first activated by ATP to form Tyr-AMP and then transferred to the acceptor end of tRNA(Tyr). This Mycoplasma mycoides subsp. mycoides SC (strain CCUG 32753 / NCTC 10114 / PG1) protein is Tyrosine--tRNA ligase.